The following is a 418-amino-acid chain: Arginine deiminase (418 aa).

C406 functions as the Amidino-cysteine intermediate in the catalytic mechanism.

This sequence belongs to the arginine deiminase family.

Its subcellular location is the cytoplasm. The enzyme catalyses L-arginine + H2O = L-citrulline + NH4(+). It participates in amino-acid degradation; L-arginine degradation via ADI pathway; carbamoyl phosphate from L-arginine: step 1/2. This chain is Arginine deiminase, found in Lentilactobacillus hilgardii (Lactobacillus hilgardii).